The following is a 299-amino-acid chain: Large ribosomal subunit protein uL18 (299 aa).

It belongs to the universal ribosomal protein uL18 family. In terms of assembly, component of the large ribosomal subunit (LSU). Interacts with Fmr1 to form the RNA-induced silencing complex (RISC), a ribonucleoprotein (RNP) complex involved in translation regulation, other components of the complex are Rm62, RpL11, AGO2 and Dcr-1.

It localises to the cytoplasm. Its subcellular location is the nucleus. In terms of biological role, component of the ribosome, a large ribonucleoprotein complex responsible for the synthesis of proteins in the cell. The small ribosomal subunit (SSU) binds messenger RNAs (mRNAs) and translates the encoded message by selecting cognate aminoacyl-transfer RNA (tRNA) molecules. The large subunit (LSU) contains the ribosomal catalytic site termed the peptidyl transferase center (PTC), which catalyzes the formation of peptide bonds, thereby polymerizing the amino acids delivered by tRNAs into a polypeptide chain. The nascent polypeptides leave the ribosome through a tunnel in the LSU and interact with protein factors that function in enzymatic processing, targeting, and the membrane insertion of nascent chains at the exit of the ribosomal tunnel. The polypeptide is Large ribosomal subunit protein uL18 (RpL5) (Drosophila melanogaster (Fruit fly)).